We begin with the raw amino-acid sequence, 59 residues long: UPF0181 protein CKO_01169 (59 aa).

This sequence belongs to the UPF0181 family.

In Citrobacter koseri (strain ATCC BAA-895 / CDC 4225-83 / SGSC4696), this protein is UPF0181 protein CKO_01169.